The primary structure comprises 1555 residues: Pre-mRNA cleavage complex 2 protein Pcf11 (1555 aa).

Serine 2 carries the post-translational modification N-acetylserine. The CID domain maps to 14–142; that stretch reads AREDACRDYQ…ALDVRVNSLD (129 aa). At serine 120 the chain carries Phosphoserine; by WNK1. Threonine 121 is modified (phosphothreonine; by WNK1). Positions 167–186 are disordered; it reads NKSPEEPSTPGTVVSSPSIS. 2 positions are modified to phosphoserine: serine 169 and serine 182. Residues 174–186 are compositionally biased toward low complexity; the sequence is STPGTVVSSPSIS. The stretch at 202–239 forms a coiled coil; the sequence is QLIRQQLLAKQKQLLELQQKKLELELEQAKAQLAVSLS. The tract at residues 266 to 648 is disordered; the sequence is VKAPHQVPVQ…QQQHRLSVDA (383 aa). Lysine 291 is covalently cross-linked (Glycyl lysine isopeptide (Lys-Gly) (interchain with G-Cter in SUMO2)). The span at 307 to 317 shows a compositional bias: basic and acidic residues; sequence HGKDQSHRKEF. Positions 320 to 333 are enriched in polar residues; the sequence is NTLNQSDTKTSKTI. A Glycyl lysine isopeptide (Lys-Gly) (interchain with G-Cter in SUMO2) cross-link involves residue lysine 328. Composition is skewed to basic and acidic residues over residues 342–364, 380–421, and 427–442; these read KQEKSKSGEKITKKELDQLDSKS, HTKD…DVKE, and EKKDKDEHMKSSEHRL. A Glycyl lysine isopeptide (Lys-Gly) (interchain with G-Cter in SUMO2) cross-link involves residue lysine 456. Threonine 459 carries the post-translational modification Phosphothreonine. The span at 475–486 shows a compositional bias: basic residues; the sequence is STRKRSRSRSPK. 4 positions are modified to phosphoserine: serine 489, serine 494, serine 509, and serine 511. Residues 494–508 show a composition bias toward basic residues; the sequence is SPKRRDRRSPKRRQR. A compositionally biased stretch (basic and acidic residues) spans 529-567; the sequence is SHMEEFTPPSREDRNAKRSTKQDIRDPRRMKKTEEERPQ. The span at 568–578 shows a compositional bias: polar residues; it reads ETTNQHSTKSG. Basic and acidic residues predominate over residues 599–615; the sequence is SGWEENKSLQQVDEHSK. Serine 645 carries the post-translational modification Phosphoserine. Residue lysine 654 forms a Glycyl lysine isopeptide (Lys-Gly) (interchain with G-Cter in SUMO2) linkage. Serine 705 is subject to Phosphoserine. Disordered regions lie at residues 707–732 and 749–781; these read FNDRFPLKRPRYEDSDKPFVDSPASR and RPLFDGPSRPSVARDGPTKMIFEGPNKLSPRID. Over residues 716 to 725 the composition is skewed to basic and acidic residues; it reads PRYEDSDKPF. Lysine 723 is covalently cross-linked (Glycyl lysine isopeptide (Lys-Gly) (interchain with G-Cter in SUMO2)). A phosphoserine mark is found at serine 728 and serine 777. The residue at position 785 (threonine 785) is a Phosphothreonine. A Phosphoserine modification is found at serine 794. An asymmetric dimethylarginine mark is found at arginine 805, arginine 820, and arginine 833. At serine 851 the chain carries Phosphoserine. An asymmetric dimethylarginine mark is found at arginine 929, arginine 942, arginine 955, arginine 981, arginine 994, and arginine 1007. The tract at residues 1056–1081 is disordered; sequence HGQPGPRFERTPGQPGPQRFDGPPGQ. Arginine 1093 and arginine 1104 each carry asymmetric dimethylarginine. Disordered regions lie at residues 1127–1147 and 1159–1187; these read VSFNQTGPYNDPPGNAFNAPS and FDSPQGPNFNGPHGPGNQSFSNPLNRASG. Serine 1161 bears the Phosphoserine mark. The span at 1162–1175 shows a compositional bias: low complexity; sequence PQGPNFNGPHGPGN. Lysine 1278 participates in a covalent cross-link: Glycyl lysine isopeptide (Lys-Gly) (interchain with G-Cter in SUMO2). Residues 1289–1298 are compositionally biased toward polar residues; it reads SATTQVSEVT. Residues 1289–1315 form a disordered region; the sequence is SATTQVSEVTAQPPPEEEEDQNEDQDV. The segment covering 1303–1315 has biased composition (acidic residues); the sequence is PEEEEDQNEDQDV. Glycyl lysine isopeptide (Lys-Gly) (interchain with G-Cter in SUMO2) cross-links involve residues lysine 1419, lysine 1511, and lysine 1524. The segment at 1516 to 1555 is disordered; that stretch reads EPCDSPKVKEERIDTPPACTEESIATPSEIKTENDTVESV. The span at 1519-1529 shows a compositional bias: basic and acidic residues; that stretch reads DSPKVKEERID. Position 1530 is a phosphothreonine (threonine 1530). Lysine 1546 is covalently cross-linked (Glycyl lysine isopeptide (Lys-Gly) (interchain with G-Cter in SUMO2)).

In terms of assembly, associates with the phosphorylated CTD domain of POLR2A /RNA polymerase II. Phosphorylation at Ser-120 and/or Thr-121 by WNK1 weakens its association with POLR2A/RNA polymerase II, promoting transcript release from the chromatin template and mRNA export to the cytoplasm.

It is found in the nucleus. In terms of biological role, component of pre-mRNA cleavage complex II, which promotes transcription termination by RNA polymerase II. The chain is Pre-mRNA cleavage complex 2 protein Pcf11 from Homo sapiens (Human).